The sequence spans 330 residues: Aspartate--ammonia ligase (330 aa).

Belongs to the class-II aminoacyl-tRNA synthetase family. AsnA subfamily.

It localises to the cytoplasm. The enzyme catalyses L-aspartate + NH4(+) + ATP = L-asparagine + AMP + diphosphate + H(+). It functions in the pathway amino-acid biosynthesis; L-asparagine biosynthesis; L-asparagine from L-aspartate (ammonia route): step 1/1. In Actinobacillus pleuropneumoniae serotype 7 (strain AP76), this protein is Aspartate--ammonia ligase.